A 468-amino-acid polypeptide reads, in one-letter code: DNA polymerase IV 1 (468 aa).

The 183-residue stretch at 6–188 (VLHLDMDAFF…LPVRRLWGIG (183 aa)) folds into the UmuC domain. The Mg(2+) site is built by D10 and D105. Residue E106 is part of the active site.

This sequence belongs to the DNA polymerase type-Y family. In terms of assembly, monomer. Requires Mg(2+) as cofactor.

Its subcellular location is the cytoplasm. The catalysed reaction is DNA(n) + a 2'-deoxyribonucleoside 5'-triphosphate = DNA(n+1) + diphosphate. Functionally, poorly processive, error-prone DNA polymerase involved in untargeted mutagenesis. Copies undamaged DNA at stalled replication forks, which arise in vivo from mismatched or misaligned primer ends. These misaligned primers can be extended by PolIV. Exhibits no 3'-5' exonuclease (proofreading) activity. May be involved in translesional synthesis, in conjunction with the beta clamp from PolIII. This is DNA polymerase IV 1 (dinB1) from Mycobacterium tuberculosis (strain CDC 1551 / Oshkosh).